Reading from the N-terminus, the 101-residue chain is NADH-quinone oxidoreductase subunit K (101 aa).

3 helical membrane-spanning segments follow: residues 4–24, 30–50, and 61–81; these read LSHF…GIFL, IVLL…FIAF, and VFVF…LAIL.

The protein belongs to the complex I subunit 4L family. In terms of assembly, NDH-1 is composed of 14 different subunits. Subunits NuoA, H, J, K, L, M, N constitute the membrane sector of the complex.

Its subcellular location is the cell inner membrane. It carries out the reaction a quinone + NADH + 5 H(+)(in) = a quinol + NAD(+) + 4 H(+)(out). Its function is as follows. NDH-1 shuttles electrons from NADH, via FMN and iron-sulfur (Fe-S) centers, to quinones in the respiratory chain. The immediate electron acceptor for the enzyme in this species is believed to be ubiquinone. Couples the redox reaction to proton translocation (for every two electrons transferred, four hydrogen ions are translocated across the cytoplasmic membrane), and thus conserves the redox energy in a proton gradient. The chain is NADH-quinone oxidoreductase subunit K from Thiobacillus denitrificans (strain ATCC 25259 / T1).